The sequence spans 841 residues: Protein NLP6 (841 aa).

The region spanning 539 to 624 (EAKTVKKSER…IDSVQGADGS (86 aa)) is the RWP-RK domain. The disordered stretch occupies residues 649-682 (NCPPTSTSPLSNLQDVKIENRDAEDSAGSSTSRA). Residues 651–662 (PPTSTSPLSNLQ) show a composition bias toward polar residues. One can recognise a PB1 domain in the interval 741 to 823 (LVSIKATYRE…NTLRLSVHDV (83 aa)).

The protein localises to the nucleus. Probable transcription factor. In Arabidopsis thaliana (Mouse-ear cress), this protein is Protein NLP6 (NLP6).